We begin with the raw amino-acid sequence, 202 residues long: Glycerol-3-phosphate acyltransferase 1 (202 aa).

5 helical membrane passes run 8–28 (AGMI…MSTG), 85–105 (LSLT…IWPL), 122–142 (ILVV…FVLA), 146–166 (QFTL…LIMA), and 173–190 (AGLA…RKNI).

The protein belongs to the PlsY family. In terms of assembly, probably interacts with PlsX.

It localises to the cell membrane. It carries out the reaction an acyl phosphate + sn-glycerol 3-phosphate = a 1-acyl-sn-glycero-3-phosphate + phosphate. It functions in the pathway lipid metabolism; phospholipid metabolism. In terms of biological role, catalyzes the transfer of an acyl group from acyl-phosphate (acyl-PO(4)) to glycerol-3-phosphate (G3P) to form lysophosphatidic acid (LPA). This enzyme utilizes acyl-phosphate as fatty acyl donor, but not acyl-CoA or acyl-ACP. The polypeptide is Glycerol-3-phosphate acyltransferase 1 (Desulfitobacterium hafniense (strain Y51)).